The following is a 146-amino-acid chain: D-aminoacyl-tRNA deacylase (146 aa).

Residues 137-138 (GP) carry the Gly-cisPro motif, important for rejection of L-amino acids motif.

It belongs to the DTD family. Homodimer.

Its subcellular location is the cytoplasm. It catalyses the reaction glycyl-tRNA(Ala) + H2O = tRNA(Ala) + glycine + H(+). The enzyme catalyses a D-aminoacyl-tRNA + H2O = a tRNA + a D-alpha-amino acid + H(+). An aminoacyl-tRNA editing enzyme that deacylates mischarged D-aminoacyl-tRNAs. Also deacylates mischarged glycyl-tRNA(Ala), protecting cells against glycine mischarging by AlaRS. Acts via tRNA-based rather than protein-based catalysis; rejects L-amino acids rather than detecting D-amino acids in the active site. By recycling D-aminoacyl-tRNA to D-amino acids and free tRNA molecules, this enzyme counteracts the toxicity associated with the formation of D-aminoacyl-tRNA entities in vivo and helps enforce protein L-homochirality. The polypeptide is D-aminoacyl-tRNA deacylase (Halalkalibacterium halodurans (strain ATCC BAA-125 / DSM 18197 / FERM 7344 / JCM 9153 / C-125) (Bacillus halodurans)).